The sequence spans 530 residues: Lysine--tRNA ligase (530 aa).

A 'HIGH' region motif is present at residues 28 to 36 (PSGHIHVGN). Residues 278 to 282 (PMSSS) carry the 'KMSKS' region motif.

The protein belongs to the class-I aminoacyl-tRNA synthetase family.

The protein resides in the cytoplasm. The catalysed reaction is tRNA(Lys) + L-lysine + ATP = L-lysyl-tRNA(Lys) + AMP + diphosphate. This is Lysine--tRNA ligase (lysS) from Methanocaldococcus jannaschii (strain ATCC 43067 / DSM 2661 / JAL-1 / JCM 10045 / NBRC 100440) (Methanococcus jannaschii).